A 2194-amino-acid chain; its full sequence is MKRKERIARRLEGIETDTQPILLQSCTGLVTHRLLEEDTPRYMRATDPASPHIGRSNEEEETSDSSLEKQTRSKQCTETSGIHADSPYSSGIMDTQSLESKAERIARYKAERRRQLAEKYGLTLDPEADSETPSRYSRSRKDPEAAEKRGVRSERSAESSRDAGSSYSRTELSGLRTCVAESKDYGLHRSDGVSDTEVLLNAENQRRGQEPSATGLARDLPLAGEVSSSFSFSGRDSALGEVPRSPKAVHSLPSPSPGQPASPSHSTSDLPLPAEARASIGKPKHEWFLQKDSEGDTPSLINWPSRVKVREKLVREESARSSPELTSESLTQRRHQTAPGHYLAFQSENSAFDRVSGKVASSARQPIRGYVQPAEPVHTITLVTSDTPESISEGSWVGPAPQTVTKPPPSKVLEGERRDTPVLHICESKAEDVLFSDALEKTRKTLAVLEDRGSGRSQEAPSGTEDLSQPAVGIVTAEPQKESESLAHPPMAQQQPTERMGRSEMVMYVQSEAVSQGHRKEVPTRKHRVLTRSLSDYTGPPQLQALKAKAPAPKRDAESQTSKAELELGLLDTKVSVAQLRNAFLESARASRKPELHSRVEGSSEGPGVERERGSRKPRRYFSPGENRKTSERFRTQPITSAERKESDRSTSNSEMPAAEDEEKVDERARLSVAAKRLLFREMEKSFDEKSVPKRRSRNAAVEQRLRRLQDRSHTQPVTTEEVVIAAEPTPASCSVATHPVMTRHPSPTVAKSPVQPARTLQASAHQKALARDQTNESKDSAEQGEPDSSTLSLAEKLALFNKLSQPVSKAISTRNRLDMRQRRMNARYQTQPVTLGEVEQVQSGKLMAFSPTINTSVSTVASTVPPMYAGNLRTKPLPDDSFGATEQKFASSLENSDSPVRSILKSQGWQPSVEGAGSKAMLREFEETERKGGLTGGDGGVTKYGSFEEAELSYPVLSRVREGDNHKEAIYALPRKGSLELAHPPIAQLGDDLKEFSTPKSTMQASPDWKERQLFEEKVDLENVTKRKFSLKAAEFGEPTSEQTGAAAGKPAAPTATPVSWKPQDPSEQPQEKRYQSPCAMFAAGEIKAPAVEGSLDSPSKTMSIKERLALLKKSGEEDWRNRLNRKQEYGKASITSSLHIQETEQSLKKKRVTESRESQMTIEERKHLITVREDAWKTRGKGAANDSTQFTVAGRMVKRGLASPTAITPVASPVSSKARGTTPVSRPLEDIEARPDMQLESDLKLDRLETFLRRLNNKVGGMQETVLTVTGKSVKEVMKPDDDETFAKFYRSVDSSLPRSPVELDEDFDVIFDPYAPRLTSSVAEHKRAVRPKRRVQASKNPLKMLAAREDLLQEYTEQRLNVAFVESKRMKVEKLSANSSFSEVTLAGLASKENFSNVSLRSVNLTEQNSNNSAVPYKKLMLLQVKGRRHVQTRLVEPRAPSLNSGDCFLLLSPHHCFLWVGEFANVIEKAKASELASLIQTKRELGCRATYIQTVEEGINTHTHAAKDFWKLLGGQASYQSAGDPKEDELYETAIIETNCIYRLMDDKLVPDDDYWGKIPKCSLLQSKEVLVFDFGSEVYVWHGKEVTLAQRKIAFQLAKHLWNGTFDYENCDINPLDPGECNPLIPRKGQGRPDWAIFGRLTEHNETILFKEKFLDWTELKRPNEKNASELAQHKDDARAEVKPYDVTRMVPVPQTTAGTVLDGVNVGRGYGLVEGDDRRQFEIASISVDVWHILEFDYSRLPKQSIGQFHEGDAYVVKWKFIVSTAVGSRQKGEHSVRVAGKEKCVYFFWQGRQSTVSEKGTSALMTVELDEERGAQVQVLQGKEPPCFLQCFQGGMVVHSGRREEEEENTQSEWRLYCVRGEVPVEGNLLEVACHCSSLRSRTSMVVLNVHKALIYLWHGCKAQAHTKEVGRTAANKIKDQCPLEAGLHSSSKVTIHECDEGSEPLGFWDALGRRDRKAYDCMLQDPGNFNFTPRLFILSSSSGDFSATEFMYPARDPSVVNSMPFLQEDLYSAPQPALFLVDNHHEVYLWQGWWPIENKITGSARIRWASDRKSAMETVLQYCRGKNLKKPPPKSYLIHAGLEPLTFTNMFPSWEHREDIAEITEMDTEVSNQITLVEDVLAKLCKTIYPLADLLARPLPEGVDPLKLEIYLTDEDFEFALDMTRDEYNALPAWKQVNLKKAKGLF.

Residues 1-174 (MKRKERIARR…SSYSRTELSG (174 aa)) form an interaction with MYLK region. Disordered stretches follow at residues 35-98 (LEED…TQSL), 118-335 (EKYG…QRRH), 388-414 (PESI…KVLE), 450-500 (EDRG…TERM), 513-563 (AVSQ…QTSK), 589-667 (RASR…KVDE), 685-719 (KSFD…QPVT), and 739-791 (HPVM…DSST). Position 50 is a phosphoserine (serine 50). Polar residues predominate over residues 87 to 98 (PYSSGIMDTQSL). Composition is skewed to basic and acidic residues over residues 139–161 (SRKD…ESSR) and 181–192 (ESKDYGLHRSDG). Serine 245 and serine 262 each carry phosphoserine. Composition is skewed to basic and acidic residues over residues 283 to 294 (PKHEWFLQKDSE) and 308 to 319 (KVREKLVREESA). Polar residues predominate over residues 320-330 (RSSPELTSESL). 2 positions are modified to phosphoserine: serine 321 and serine 322. Residues 455-467 (GRSQEAPSGTEDL) are compositionally biased toward polar residues. The segment covering 540–551 (PPQLQALKAKAP) has biased composition (low complexity). Composition is skewed to basic and acidic residues over residues 592 to 615 (RKPE…ERGS) and 626 to 635 (ENRKTSERFR). Residues serine 652 and serine 686 each carry the phosphoserine modification. Residues 704–714 (QRLRRLQDRSH) are compositionally biased toward basic and acidic residues. Phosphoserine occurs at positions 747 and 781. Over residues 770–782 (LARDQTNESKDSA) the composition is skewed to basic and acidic residues. A Phosphotyrosine modification is found at tyrosine 829. Threonine 831 carries the post-translational modification Phosphothreonine. A phosphoserine mark is found at serine 893, serine 899, serine 903, serine 947, serine 979, and serine 1031. The disordered stretch occupies residues 1036–1077 (EFGEPTSEQTGAAAGKPAAPTATPVSWKPQDPSEQPQEKRYQ). The segment covering 1045–1059 (TGAAAGKPAAPTATP) has biased composition (low complexity). A phosphoserine mark is found at serine 1099 and serine 1205. Phosphothreonine is present on threonine 1210. 3 positions are modified to phosphoserine: serine 1214, serine 1302, and serine 1385. Residues 1399 to 1667 (SNVSLRSVNL…KFLDWTELKR (269 aa)) are interaction with NEB. 5 Gelsolin-like repeats span residues 1421 to 1520 (KKLM…LGGQ), 1540 to 1662 (IETN…FLDW), 1732 to 1842 (ISVD…FQGG), 1861 to 1962 (WRLY…LGRR), and 1995 to 2102 (ATEF…FPSW). The HP domain maps to 2131–2194 (KLCKTIYPLA…VNLKKAKGLF (64 aa)).

This sequence belongs to the villin/gelsolin family. As to quaternary structure, associates with F-actin. Interacts with NEB. Interacts with MYH9. Interacts with MYLK. Interacts with TASOR. Interacts with TRIP6 and DYNLT1. Interacts with KIF14; at midbody during cytokinesis.

It is found in the cell membrane. Its subcellular location is the cytoplasm. It localises to the cytoskeleton. The protein localises to the cell projection. The protein resides in the invadopodium. It is found in the podosome. Its subcellular location is the midbody. It localises to the cleavage furrow. Forms a high-affinity link between the actin cytoskeleton and the membrane. Is among the first costameric proteins to assemble during myogenesis and it contributes to myogenic membrane structure and differentiation. Appears to be involved in myosin II assembly. May modulate myosin II regulation through MLCK during cell spreading, an initial step in cell migration. May play a role in invadopodial function. In terms of biological role, may be involved in modulation of focal adhesions. Supervillin-mediated down-regulation of focal adhesions involves binding to TRIP6. Plays a role in cytokinesis through KIF14 interaction. The protein is Supervillin of Bos taurus (Bovine).